The sequence spans 130 residues: Small ribosomal subunit protein uS8 (130 aa).

It belongs to the universal ribosomal protein uS8 family. Part of the 30S ribosomal subunit. Contacts proteins S5 and S12.

In terms of biological role, one of the primary rRNA binding proteins, it binds directly to 16S rRNA central domain where it helps coordinate assembly of the platform of the 30S subunit. This is Small ribosomal subunit protein uS8 from Vibrio vulnificus (strain CMCP6).